The chain runs to 562 residues: Dihydroxy-acid dehydratase (562 aa).

Asp80 contributes to the Mg(2+) binding site. Cys121 serves as a coordination point for [2Fe-2S] cluster. Mg(2+)-binding residues include Asp122 and Lys123. The residue at position 123 (Lys123) is an N6-carboxylysine. Cys194 serves as a coordination point for [2Fe-2S] cluster. Glu446 contributes to the Mg(2+) binding site. Ser472 acts as the Proton acceptor in catalysis.

This sequence belongs to the IlvD/Edd family. In terms of assembly, homodimer. Requires [2Fe-2S] cluster as cofactor. Mg(2+) serves as cofactor.

It catalyses the reaction (2R)-2,3-dihydroxy-3-methylbutanoate = 3-methyl-2-oxobutanoate + H2O. The catalysed reaction is (2R,3R)-2,3-dihydroxy-3-methylpentanoate = (S)-3-methyl-2-oxopentanoate + H2O. It participates in amino-acid biosynthesis; L-isoleucine biosynthesis; L-isoleucine from 2-oxobutanoate: step 3/4. The protein operates within amino-acid biosynthesis; L-valine biosynthesis; L-valine from pyruvate: step 3/4. In terms of biological role, functions in the biosynthesis of branched-chain amino acids. Catalyzes the dehydration of (2R,3R)-2,3-dihydroxy-3-methylpentanoate (2,3-dihydroxy-3-methylvalerate) into 2-oxo-3-methylpentanoate (2-oxo-3-methylvalerate) and of (2R)-2,3-dihydroxy-3-methylbutanoate (2,3-dihydroxyisovalerate) into 2-oxo-3-methylbutanoate (2-oxoisovalerate), the penultimate precursor to L-isoleucine and L-valine, respectively. This chain is Dihydroxy-acid dehydratase, found in Staphylococcus aureus (strain MRSA252).